Here is a 261-residue protein sequence, read N- to C-terminus: Cytochrome c oxidase subunit 3 (261 aa).

Topologically, residues 1 to 15 are mitochondrial matrix; it reads MSHQAHAYHMVDPSP. A helical membrane pass occupies residues 16–34; that stretch reads WPLTGAGAALLMTSGLAMW. The Mitochondrial intermembrane portion of the chain corresponds to 35-40; the sequence is FHKNSC. The helical transmembrane segment at 41 to 66 threads the bilayer; the sequence is ILMTLGLILMLLTMYQWWRDIVREGT. Residues 67–72 are Mitochondrial matrix-facing; the sequence is FLGHHT. The helical transmembrane segment at 73-105 threads the bilayer; sequence SPVQQGLRYGMILFIISEVCFFAGFFWAFYHAS. The Mitochondrial intermembrane segment spans residues 106–128; that stretch reads LAPTPELGLTWPPTGINPLNPFE. A helical transmembrane segment spans residues 129-152; that stretch reads VPLLNTAVLLASGVSVTWAHHSIT. The Mitochondrial matrix portion of the chain corresponds to 153–155; it reads EKN. The helical transmembrane segment at 156 to 183 threads the bilayer; that stretch reads RTETTQALTLTVLLGLYFTALQIMEYYE. Over 184 to 190 the chain is Mitochondrial intermembrane; that stretch reads TPFTMAD. Residues 191-223 form a helical membrane-spanning segment; it reads GVYGSTFFVATGFHGLHVIIGSLFLLTCLLRHL. Residues 224–232 lie on the Mitochondrial matrix side of the membrane; it reads QYHFTSKHH. A helical membrane pass occupies residues 233 to 256; that stretch reads FGFEAAAWYWHFVDVVWLFLYISI. At 257-261 the chain is on the mitochondrial intermembrane side; it reads YWWGS.

It belongs to the cytochrome c oxidase subunit 3 family. As to quaternary structure, component of the cytochrome c oxidase (complex IV, CIV), a multisubunit enzyme composed of 14 subunits. The complex is composed of a catalytic core of 3 subunits MT-CO1, MT-CO2 and MT-CO3, encoded in the mitochondrial DNA, and 11 supernumerary subunits COX4I, COX5A, COX5B, COX6A, COX6B, COX6C, COX7A, COX7B, COX7C, COX8 and NDUFA4, which are encoded in the nuclear genome. The complex exists as a monomer or a dimer and forms supercomplexes (SCs) in the inner mitochondrial membrane with NADH-ubiquinone oxidoreductase (complex I, CI) and ubiquinol-cytochrome c oxidoreductase (cytochrome b-c1 complex, complex III, CIII), resulting in different assemblies (supercomplex SCI(1)III(2)IV(1) and megacomplex MCI(2)III(2)IV(2)).

The protein resides in the mitochondrion inner membrane. The enzyme catalyses 4 Fe(II)-[cytochrome c] + O2 + 8 H(+)(in) = 4 Fe(III)-[cytochrome c] + 2 H2O + 4 H(+)(out). Component of the cytochrome c oxidase, the last enzyme in the mitochondrial electron transport chain which drives oxidative phosphorylation. The respiratory chain contains 3 multisubunit complexes succinate dehydrogenase (complex II, CII), ubiquinol-cytochrome c oxidoreductase (cytochrome b-c1 complex, complex III, CIII) and cytochrome c oxidase (complex IV, CIV), that cooperate to transfer electrons derived from NADH and succinate to molecular oxygen, creating an electrochemical gradient over the inner membrane that drives transmembrane transport and the ATP synthase. Cytochrome c oxidase is the component of the respiratory chain that catalyzes the reduction of oxygen to water. Electrons originating from reduced cytochrome c in the intermembrane space (IMS) are transferred via the dinuclear copper A center (CU(A)) of subunit 2 and heme A of subunit 1 to the active site in subunit 1, a binuclear center (BNC) formed by heme A3 and copper B (CU(B)). The BNC reduces molecular oxygen to 2 water molecules using 4 electrons from cytochrome c in the IMS and 4 protons from the mitochondrial matrix. The protein is Cytochrome c oxidase subunit 3 (MT-CO3) of Petromyzon marinus (Sea lamprey).